We begin with the raw amino-acid sequence, 266 residues long: Putative pyruvate, phosphate dikinase regulatory protein (266 aa).

An ADP-binding site is contributed by 149 to 156 (GVSRTSKT).

The protein belongs to the pyruvate, phosphate/water dikinase regulatory protein family. PDRP subfamily.

The enzyme catalyses N(tele)-phospho-L-histidyl/L-threonyl-[pyruvate, phosphate dikinase] + ADP = N(tele)-phospho-L-histidyl/O-phospho-L-threonyl-[pyruvate, phosphate dikinase] + AMP + H(+). The catalysed reaction is N(tele)-phospho-L-histidyl/O-phospho-L-threonyl-[pyruvate, phosphate dikinase] + phosphate + H(+) = N(tele)-phospho-L-histidyl/L-threonyl-[pyruvate, phosphate dikinase] + diphosphate. Bifunctional serine/threonine kinase and phosphorylase involved in the regulation of the pyruvate, phosphate dikinase (PPDK) by catalyzing its phosphorylation/dephosphorylation. This chain is Putative pyruvate, phosphate dikinase regulatory protein, found in Halothermothrix orenii (strain H 168 / OCM 544 / DSM 9562).